The sequence spans 580 residues: Alpha-glucosidase (580 aa).

Positions 1–19 (MRPLGALSLFALLATTVSG) are cleaved as a signal peptide. Asparagine 102 and asparagine 127 each carry an N-linked (GlcNAc...) asparagine glycan. Aspartate 224 (nucleophile) is an active-site residue. The active-site Proton donor is the glutamate 290. An N-linked (GlcNAc...) asparagine glycan is attached at asparagine 501. A helical membrane pass occupies residues 560 to 580 (AAAINLSIGLLLAIMARYIFV).

The protein belongs to the glycosyl hydrolase 13 family. As to quaternary structure, (Microbial infection) Binds to L.sphaericus BinB subunit of the binary toxin BinAB. In 4th-instar larvae produced in the brush border membranes of the gastric caeca and the posterior stomach cells (at protein level).

Its subcellular location is the membrane. It carries out the reaction Hydrolysis of terminal, non-reducing (1-&gt;4)-linked alpha-D-glucose residues with release of alpha-D-glucose.. Its function is as follows. Probably an alpha-glucosidase, it has no alpha-amylase function. Functionally, (Microbial infection) Serves as the larval receptor for Lysinibacillus sphaericus BinB toxin. In Culex pipiens (House mosquito), this protein is Alpha-glucosidase.